Here is a 90-residue protein sequence, read N- to C-terminus: Delta-aiptatoxin-Adi1a (90 aa).

Residues 1-21 (MKTAMLIAVLGFCAALCFVES) form the signal peptide. A propeptide spanning residues 22-44 (SHEEEREAAVYLTDLVSKAESAI) is cleaved from the precursor. 3 disulfide bridges follow: Cys50–Cys86, Cys52–Cys77, and Cys70–Cys87.

Belongs to the sea anemone sodium channel inhibitory toxin family.

The protein localises to the secreted. Its subcellular location is the nematocyst. Functionally, cardioactive peptide that acts on voltage-gated sodium channels (hNav1.5/SCN5A) and voltage-gated potassium channels (Kv). The activity on sodium channels consists of inhibition on sodium current inactivation with no significant effect on current activation. This effect may be caused by direct interaction of the toxin with sodium channel site-3. The activity on potassium channels consists of a significant increase of the amplitude of the transient component of the potassium current, shifting the current threshold to more negative membrane potentials. These effects are concentration-dependent and reversible and may be due to a direct interaction between the toxin and the voltage-sensing domain of the channel. Physiologically, this toxin increases the amplitude of cardiomyocyte contraction and slows the late phase of the twitch relaxation velocity with no induction of spontaneous twitching. It increases action potential duration of cardiomyocytes with no effect on its threshold and on the cell resting potential. On insects, it shows neurotoxic activity to the blowfly larvae S.falculaty, causing an immediate spasm that progressed to body contraction and paralysis. The polypeptide is Delta-aiptatoxin-Adi1a (Exaiptasia diaphana (Tropical sea anemone)).